We begin with the raw amino-acid sequence, 166 residues long: Lutropin subunit beta (166 aa).

Residues 1-21 (MGGAQVLLLLTLLGTPLVTHG) form the signal peptide. Cystine bridges form between cysteine 56–cysteine 104, cysteine 70–cysteine 119, cysteine 73–cysteine 157, cysteine 81–cysteine 135, cysteine 85–cysteine 137, and cysteine 140–cysteine 147. N-linked (GlcNAc...) asparagine glycosylation is present at asparagine 60.

It belongs to the glycoprotein hormones subunit beta family. In terms of assembly, heterodimer of a common alpha chain and a unique beta chain which confers biological specificity to thyrotropin, lutropin, follitropin and gonadotropin.

It is found in the secreted. Functionally, promotes spermatogenesis and ovulation by stimulating the testes and ovaries to synthesize steroids. The protein is Lutropin subunit beta (LHB) of Coturnix japonica (Japanese quail).